Here is a 222-residue protein sequence, read N- to C-terminus: Deoxyribose-phosphate aldolase (222 aa).

D89 serves as the catalytic Proton donor/acceptor. K152 acts as the Schiff-base intermediate with acetaldehyde in catalysis. The active-site Proton donor/acceptor is the K181.

This sequence belongs to the DeoC/FbaB aldolase family. DeoC type 1 subfamily.

Its subcellular location is the cytoplasm. It catalyses the reaction 2-deoxy-D-ribose 5-phosphate = D-glyceraldehyde 3-phosphate + acetaldehyde. The protein operates within carbohydrate degradation; 2-deoxy-D-ribose 1-phosphate degradation; D-glyceraldehyde 3-phosphate and acetaldehyde from 2-deoxy-alpha-D-ribose 1-phosphate: step 2/2. In terms of biological role, catalyzes a reversible aldol reaction between acetaldehyde and D-glyceraldehyde 3-phosphate to generate 2-deoxy-D-ribose 5-phosphate. This chain is Deoxyribose-phosphate aldolase, found in Clostridium novyi (strain NT).